Here is a 147-residue protein sequence, read N- to C-terminus: Large ribosomal subunit protein uL15 (147 aa).

Residues 1–14 are compositionally biased toward basic and acidic residues; that stretch reads MKLHELRPAEGAVR. A disordered region spans residues 1 to 54; it reads MKLHELRPAEGAVRDRKRKGRGTASGLGKTAGRGSNGQKARSGGGVRPGFEGGQ. 2 stretches are compositionally biased toward gly residues: residues 23–35 and 42–52; these read TASGLGKTAGRGS and SGGGVRPGFEG.

This sequence belongs to the universal ribosomal protein uL15 family. Part of the 50S ribosomal subunit.

Functionally, binds to the 23S rRNA. The sequence is that of Large ribosomal subunit protein uL15 from Alkaliphilus oremlandii (strain OhILAs) (Clostridium oremlandii (strain OhILAs)).